A 300-amino-acid polypeptide reads, in one-letter code: Cathepsin B-like CP2 (300 aa).

Positions 1-19 (MKLFLLAAAAFSAPALTVS) are cleaved as a signal peptide. 3 cysteine pairs are disulfide-bonded: cysteine 88-cysteine 115, cysteine 98-cysteine 141, and cysteine 134-cysteine 177. Residue cysteine 101 is part of the active site. Residues histidine 245 and asparagine 266 contribute to the active site.

It belongs to the peptidase C1 family.

The protein resides in the vacuole. In terms of biological role, thiol protease which is required for parasite excystation and invasion of the proximal small intestine of the human host. This is Cathepsin B-like CP2 (CP2) from Giardia intestinalis (Giardia lamblia).